Here is a 39-residue protein sequence, read N- to C-terminus: Cytochrome b559 subunit beta (39 aa).

Residues 14-30 traverse the membrane as a helical segment; it reads WLAIHGLAVPTVFFLGS. Residue His-18 coordinates heme.

Belongs to the PsbE/PsbF family. In terms of assembly, heterodimer of an alpha subunit and a beta subunit. PSII is composed of 1 copy each of membrane proteins PsbA, PsbB, PsbC, PsbD, PsbE, PsbF, PsbH, PsbI, PsbJ, PsbK, PsbL, PsbM, PsbT, PsbX, PsbY, PsbZ, Psb30/Ycf12, at least 3 peripheral proteins of the oxygen-evolving complex and a large number of cofactors. It forms dimeric complexes. Requires heme b as cofactor.

The protein localises to the plastid. Its subcellular location is the chloroplast thylakoid membrane. Its function is as follows. This b-type cytochrome is tightly associated with the reaction center of photosystem II (PSII). PSII is a light-driven water:plastoquinone oxidoreductase that uses light energy to abstract electrons from H(2)O, generating O(2) and a proton gradient subsequently used for ATP formation. It consists of a core antenna complex that captures photons, and an electron transfer chain that converts photonic excitation into a charge separation. The chain is Cytochrome b559 subunit beta from Staurastrum punctulatum (Green alga).